Consider the following 253-residue polypeptide: RBPJ-interacting and tubulin-associated protein 1 (253 aa).

Disordered stretches follow at residues 30–89, 127–175, and 188–253; these read SPAR…KNKY, TPPA…LCVP, and HLTV…PPWK. Polar residues predominate over residues 71–81; the sequence is SPSSRGSTPNL. The Nuclear localization signal motif lies at 81–97; the sequence is LTPRKKNKYRLIGHAPS. Positions 112–140 are interaction with RBPJ/RBPSUH; the sequence is RMAVGDAAKLRTLFWTPPATPRGSHTPCP. Positions 140–253 are interaction with tubulin; the sequence is PRETPLRAIH…CPPKPKPPWK (114 aa). Positions 188 to 228 are enriched in polar residues; the sequence is HLTVPSTGHPASSAPQTNGPWSPRPNTSGATVQSPLVTSKA.

Belongs to the RITA family. As to quaternary structure, interacts with RBPJ/RBPSUH.

The protein resides in the cytoplasm. Its subcellular location is the nucleus. It localises to the cytoskeleton. It is found in the microtubule organizing center. The protein localises to the centrosome. In terms of biological role, tubulin-binding protein that acts as a negative regulator of Notch signaling pathway. Shuttles between the cytoplasm and the nucleus and mediates the nuclear export of RBPJ/RBPSUH, thereby preventing the interaction between RBPJ/RBPSUH and NICD product of Notch proteins (Notch intracellular domain), leading to down-regulate Notch-mediated transcription. May play a role in neurogenesis. The protein is RBPJ-interacting and tubulin-associated protein 1 (Rita1) of Mus musculus (Mouse).